The following is a 753-amino-acid chain: Glycerophosphodiester phosphodiesterase GDPDL6 (753 aa).

Positions 1–17 (MLRFFILFSLFLHSSVA) are cleaved as a signal peptide. 2 GP-PDE domains span residues 41-339 (PAVV…SQSI) and 355-654 (ALVI…TRYL). N-linked (GlcNAc...) asparagine glycosylation is found at Asn304, Asn516, Asn603, and Asn715. The disordered stretch occupies residues 707–729 (PPVAKLASNGTEGGPPQTPPRSG). A helical transmembrane segment spans residues 731-751 (VAIAANLSLSLLAMMALGLLY).

This sequence belongs to the glycerophosphoryl diester phosphodiesterase family. Expressed in flowers and siliques.

Its subcellular location is the membrane. The enzyme catalyses a sn-glycero-3-phosphodiester + H2O = an alcohol + sn-glycerol 3-phosphate + H(+). This is Glycerophosphodiester phosphodiesterase GDPDL6 from Arabidopsis thaliana (Mouse-ear cress).